A 245-amino-acid polypeptide reads, in one-letter code: rRNA adenine N-6-methyltransferase (245 aa).

S-adenosyl-L-methionine-binding residues include asparagine 10, leucine 12, glycine 37, glutamate 58, aspartate 83, and asparagine 100.

This sequence belongs to the class I-like SAM-binding methyltransferase superfamily. rRNA adenine N(6)-methyltransferase family.

The enzyme catalyses adenosine(2085) in 23S rRNA + 2 S-adenosyl-L-methionine = N(6)-dimethyladenosine(2085) in 23S rRNA + 2 S-adenosyl-L-homocysteine + 2 H(+). In terms of biological role, this protein produces a dimethylation of the adenine residue at position 2085 in 23S rRNA, resulting in reduced affinity between ribosomes and macrolide-lincosamide-streptogramin B antibiotics. The protein is rRNA adenine N-6-methyltransferase (ermBC) of Escherichia coli.